The primary structure comprises 255 residues: Triosephosphate isomerase (255 aa).

Asn-10 to Lys-12 is a binding site for substrate. Residue His-96 is the Electrophile of the active site. Catalysis depends on Glu-169, which acts as the Proton acceptor. Residues Gly-175, Ser-214, and Gly-235 to Gly-236 each bind substrate.

The protein belongs to the triosephosphate isomerase family. In terms of assembly, homodimer.

The protein localises to the cytoplasm. It carries out the reaction D-glyceraldehyde 3-phosphate = dihydroxyacetone phosphate. The protein operates within carbohydrate biosynthesis; gluconeogenesis. It functions in the pathway carbohydrate degradation; glycolysis; D-glyceraldehyde 3-phosphate from glycerone phosphate: step 1/1. Functionally, involved in the gluconeogenesis. Catalyzes stereospecifically the conversion of dihydroxyacetone phosphate (DHAP) to D-glyceraldehyde-3-phosphate (G3P). The polypeptide is Triosephosphate isomerase (Coxiella burnetii (strain Dugway 5J108-111)).